A 373-amino-acid chain; its full sequence is HAUS augmin-like complex subunit 8 (373 aa).

Composition is skewed to basic and acidic residues over residues 1 to 10 (MADSSERDAG), 32 to 43 (RVVESRYLQYDK), and 52 to 73 (AKEE…REES). Residues 1–76 (MADSSERDAG…PRSREESQVM (76 aa)) form a disordered region. Ala2 is subject to N-acetylalanine. Residue Ser99 is modified to Phosphoserine. A coiled-coil region spans residues 130–204 (DKKRILRKKR…LRRQLLLRQK (75 aa)).

This sequence belongs to the HAUS8 family. As to quaternary structure, component of the HAUS augmin-like complex. The complex interacts with the gamma-tubulin ring complex and this interaction is required for spindle assembly. Associates with microtubules. The interaction with microtubules is strong during mitosis, while it is weak or absent during interphase. It is unclear whether this interaction is direct or indirect. Interacts with EML3 (phosphorylated at 'Thr-882') and TUBG1.

It is found in the cytoplasm. Its subcellular location is the cytoskeleton. The protein resides in the microtubule organizing center. It localises to the centrosome. The protein localises to the spindle. It is found in the spindle pole. Functionally, contributes to mitotic spindle assembly, maintenance of centrosome integrity and completion of cytokinesis as part of the HAUS augmin-like complex. The chain is HAUS augmin-like complex subunit 8 (Haus8) from Mus musculus (Mouse).